We begin with the raw amino-acid sequence, 445 residues long: Branched-chain amino acid permease BraB (445 aa).

12 helical membrane passes run 11-31 (IIIGFMLFALFFGAGNMIYPP), 45-65 (IGGFLLTGVGLPLLGIIAIAL), 79-99 (PVFGTIFTVVLYLSIGPLFAI), 122-142 (LSLLIFTLIFFGVTYYLALNP), 158-178 (FTIILIIVLKAIFTPMGGLGA), 192-212 (FLEGYKTMDALASIVFGVVVV), 233-253 (AGVIAALGLTFIYVSLAYLGA), 275-295 (YLFGSLGNIVLGAAITVACLT), 311-331 (LIPALSYKIVVTIVTLFSLII), 339-359 (IIAFSVPILSAIYPLAIVIIV), 375-395 (IACLIGTGLFSILDGIKAAGF), and 415-435 (IGWVLPGIVGAVIGYVLTLFI).

It belongs to the branched chain amino acid transporter family.

It is found in the cell membrane. Its function is as follows. Branched-chain amino acid transport system which is involved in the uptake of isoleucine, valine and probably leucine. Together with BcaP and BrnQ, plays an important role in the activation of CodY, a branched-chain amino acid-responsive transcriptional regulator that controls the expression of several dozen transcription units in B.subtilis. This Bacillus subtilis (strain 168) protein is Branched-chain amino acid permease BraB.